The primary structure comprises 112 residues: Putative pterin-4-alpha-carbinolamine dehydratase (112 aa).

It belongs to the pterin-4-alpha-carbinolamine dehydratase family.

It carries out the reaction (4aS,6R)-4a-hydroxy-L-erythro-5,6,7,8-tetrahydrobiopterin = (6R)-L-erythro-6,7-dihydrobiopterin + H2O. This Shewanella denitrificans (strain OS217 / ATCC BAA-1090 / DSM 15013) protein is Putative pterin-4-alpha-carbinolamine dehydratase.